The sequence spans 376 residues: Formate dehydrogenase 2 (376 aa).

Substrate is bound by residues V97 and N121. NAD(+)-binding positions include 176–177 (RI), D197, 244–248 (PLHKD), T270, D296, and 325–328 (HISG).

It belongs to the D-isomer specific 2-hydroxyacid dehydrogenase family. FDH subfamily. Homodimer.

The protein localises to the cytoplasm. The enzyme catalyses formate + NAD(+) = CO2 + NADH. Its function is as follows. Catalyzes the NAD(+)-dependent oxidation of formate to carbon dioxide. Formate oxidation is the final step in the methanol oxidation pathway in methylotrophic microorganisms. Has a role in the detoxification of exogenous formate in non-methylotrophic organisms. This is Formate dehydrogenase 2 (FDH2) from Saccharomyces cerevisiae (strain CEN.PK113-7D) (Baker's yeast).